Here is a 29-residue protein sequence, read N- to C-terminus: Cytolysin Uc-1 (29 aa).

Residues 1–15 (DEQTGSKGPNENLPS) show a composition bias toward polar residues. Residues 1–29 (DEQTGSKGPNENLPSQKDLXAKASXLTEV) form a disordered region.

Its subcellular location is the secreted. The protein resides in the nematocyst. It is found in the target cell membrane. Pore-forming toxin that lyses bovine erythrocytes at nanomolar concentrations. Is devoid of enzymatic activity. Binds to monolayers and efficiently permeabilizes small lipid vesicles composed of sphingomyelin and cholesterol. The cytolytic activity is not prevented by cholesterol or sphingomyelin. This Urticina crassicornis (Mottled anemone) protein is Cytolysin Uc-1.